The primary structure comprises 216 residues: Small ribosomal subunit protein uS3 (216 aa).

The 69-residue stretch at I38–R106 folds into the KH type-2 domain.

The protein belongs to the universal ribosomal protein uS3 family. In terms of assembly, part of the 30S ribosomal subunit. Forms a tight complex with proteins S10 and S14.

Binds the lower part of the 30S subunit head. Binds mRNA in the 70S ribosome, positioning it for translation. The protein is Small ribosomal subunit protein uS3 of Syntrophus aciditrophicus (strain SB).